Here is a 163-residue protein sequence, read N- to C-terminus: Nitrogen regulatory protein (163 aa).

Residues 12-156 (SVLNRECTRS…EELYQIITDT (145 aa)) enclose the PTS EIIA type-2 domain. Residue histidine 73 is the Tele-phosphohistidine intermediate of the active site.

It is found in the cytoplasm. Functionally, seems to have a role in regulating nitrogen assimilation. The protein is Nitrogen regulatory protein (ptsN) of Escherichia coli (strain K12).